The sequence spans 35 residues: Photosystem II reaction center protein T (35 aa).

Residues 3–23 traverse the membrane as a helical segment; it reads ALVYTFLLVSTLGIIFFAIFF.

It belongs to the PsbT family. PSII is composed of 1 copy each of membrane proteins PsbA, PsbB, PsbC, PsbD, PsbE, PsbF, PsbH, PsbI, PsbJ, PsbK, PsbL, PsbM, PsbT, PsbY, PsbZ, Psb30/Ycf12, at least 3 peripheral proteins of the oxygen-evolving complex and a large number of cofactors. It forms dimeric complexes.

Its subcellular location is the plastid. The protein resides in the chloroplast thylakoid membrane. Its function is as follows. Found at the monomer-monomer interface of the photosystem II (PS II) dimer, plays a role in assembly and dimerization of PSII. PSII is a light-driven water plastoquinone oxidoreductase, using light energy to abstract electrons from H(2)O, generating a proton gradient subsequently used for ATP formation. The polypeptide is Photosystem II reaction center protein T (Drimys granadensis).